A 215-amino-acid polypeptide reads, in one-letter code: 3-isopropylmalate dehydratase small subunit (215 aa).

The protein belongs to the LeuD family. LeuD type 1 subfamily. In terms of assembly, heterodimer of LeuC and LeuD.

It catalyses the reaction (2R,3S)-3-isopropylmalate = (2S)-2-isopropylmalate. Its pathway is amino-acid biosynthesis; L-leucine biosynthesis; L-leucine from 3-methyl-2-oxobutanoate: step 2/4. In terms of biological role, catalyzes the isomerization between 2-isopropylmalate and 3-isopropylmalate, via the formation of 2-isopropylmaleate. The polypeptide is 3-isopropylmalate dehydratase small subunit (Xylella fastidiosa (strain M12)).